The primary structure comprises 105 residues: Small ribosomal subunit protein uS10 (105 aa).

The protein belongs to the universal ribosomal protein uS10 family. As to quaternary structure, part of the 30S ribosomal subunit.

Its function is as follows. Involved in the binding of tRNA to the ribosomes. In Rickettsia peacockii (strain Rustic), this protein is Small ribosomal subunit protein uS10.